Here is a 468-residue protein sequence, read N- to C-terminus: Uronate isomerase (468 aa).

It belongs to the metallo-dependent hydrolases superfamily. Uronate isomerase family.

It catalyses the reaction D-glucuronate = D-fructuronate. The catalysed reaction is aldehydo-D-galacturonate = keto-D-tagaturonate. It participates in carbohydrate metabolism; pentose and glucuronate interconversion. The protein is Uronate isomerase of Phocaeicola vulgatus (strain ATCC 8482 / DSM 1447 / JCM 5826 / CCUG 4940 / NBRC 14291 / NCTC 11154) (Bacteroides vulgatus).